Here is a 493-residue protein sequence, read N- to C-terminus: Probable cytochrome P450 6a13 (493 aa).

Residue cysteine 435 coordinates heme.

This sequence belongs to the cytochrome P450 family. The cofactor is heme.

It is found in the endoplasmic reticulum membrane. The protein resides in the microsome membrane. Functionally, may be involved in the metabolism of insect hormones and in the breakdown of synthetic insecticides. The chain is Probable cytochrome P450 6a13 (Cyp6a13) from Drosophila melanogaster (Fruit fly).